The chain runs to 136 residues: MLQPKRMKFRKMFKGRNRGLANGTEVSFGTFGLKAVGRGRLTARQIESARRAMTRHIKRQGQIWIRVFPDKPITSKPLEVRMGKGKGNVEYWVCQIQPGKVLYEMNGVSEVIAREAFALAAAKLPIKTTFVTKTVM.

Belongs to the universal ribosomal protein uL16 family. In terms of assembly, part of the 50S ribosomal subunit.

Binds 23S rRNA and is also seen to make contacts with the A and possibly P site tRNAs. In Shewanella baltica (strain OS155 / ATCC BAA-1091), this protein is Large ribosomal subunit protein uL16.